The chain runs to 415 residues: uncharacterized protein (415 aa).

Positions 85, 91, 94, and 175 each coordinate [4Fe-4S] cluster. Residues Gln248, Tyr276, Glu297, and Asn344 each contribute to the S-adenosyl-L-methionine site. Catalysis depends on Cys371, which acts as the Nucleophile.

This sequence belongs to the class I-like SAM-binding methyltransferase superfamily. RNA M5U methyltransferase family.

This is an uncharacterized protein from Leptospira interrogans serogroup Icterohaemorrhagiae serovar copenhageni (strain Fiocruz L1-130).